The chain runs to 715 residues: DNA-directed RNA polymerase subunit beta' (715 aa).

4 residues coordinate Zn(2+): cysteine 69, cysteine 71, cysteine 87, and cysteine 90. The segment at 244 to 272 (APESQSEVIEAQGPVPQAEEEKQRDQSIQ) is disordered. Aspartate 520, aspartate 522, and aspartate 524 together coordinate Mg(2+).

This sequence belongs to the RNA polymerase beta' chain family. RpoC1 subfamily. In plastids the minimal PEP RNA polymerase catalytic core is composed of four subunits: alpha, beta, beta', and beta''. When a (nuclear-encoded) sigma factor is associated with the core the holoenzyme is formed, which can initiate transcription. Requires Mg(2+) as cofactor. Zn(2+) is required as a cofactor.

It is found in the plastid. Its subcellular location is the chloroplast. The catalysed reaction is RNA(n) + a ribonucleoside 5'-triphosphate = RNA(n+1) + diphosphate. DNA-dependent RNA polymerase catalyzes the transcription of DNA into RNA using the four ribonucleoside triphosphates as substrates. The polypeptide is DNA-directed RNA polymerase subunit beta' (Zygnema circumcarinatum (Green alga)).